Consider the following 536-residue polypeptide: Organic anion transporter 3 (536 aa).

At 1 to 11 (MTFSEILDRVG) the chain is on the cytoplasmic side. Position 4 is a phosphoserine (Ser-4). A helical transmembrane segment spans residues 12–32 (SMGPFQYLHVTLLALPVLGIA). At 33 to 123 (NHNLLQIFTA…LVCSSNKLKE (91 aa)) the chain is on the extracellular side. 2 N-linked (GlcNAc...) asparagine glycosylation sites follow: Asn-81 and Asn-86. A helical membrane pass occupies residues 124-144 (MAQSIFMAGILVGGPVIGELS). The Cytoplasmic portion of the chain corresponds to 145 to 158 (DRFGRKPILTWSYL). Residues 159-179 (MLAASGSGAAFSPSLPVYMIF) traverse the membrane as a helical segment. A topological domain (extracellular) is located at residue Arg-180. Residues 181–201 (FLCGCSISGISLSTVILNVEW) traverse the membrane as a helical segment. The Cytoplasmic segment spans residues 202-212 (VPTSMRAISST). The chain crosses the membrane as a helical span at residues 213–233 (SIGYCYTIGQFILSGLAYAIP). Residues 234–236 (QWR) lie on the Extracellular side of the membrane. Residues 237–257 (WLQLTSSAPFFIFSLLSWWVP) traverse the membrane as a helical segment. The Cytoplasmic segment spans residues 258 to 327 (ESIRWLVLSG…FRVSILRRVT (70 aa)). A helical membrane pass occupies residues 328 to 348 (FCLSLAWFSTGFAYYSLAMGV). At 349 to 354 (EEFGVN) the chain is on the extracellular side. Residues 355–375 (IYILQIIFGGVDIPAKFITIL) traverse the membrane as a helical segment. Topologically, residues 376–383 (SLSYLGRR) are cytoplasmic. The helical transmembrane segment at 384–404 (ITQSFLLLLAGGAILALIFVP) threads the bilayer. The Extracellular portion of the chain corresponds to 405–411 (SEMQLLR). A helical membrane pass occupies residues 412–432 (TALAVFGKGCLSGSFSCLFLY). Over 433–471 (TSELYPTVLRQTGMGISNVWARVGSMIAPLVKITGELQP) the chain is Cytoplasmic. The chain crosses the membrane as a helical span at residues 472-492 (FIPNVIFGTTALLGGSAAFFL). Residues 493-536 (LETLNRPLPETIEDIQNWHKQVQKTKQESEAEKASQIIPLKTGG) lie on the Extracellular side of the membrane. Residues 515–536 (QKTKQESEAEKASQIIPLKTGG) are disordered.

This sequence belongs to the major facilitator (TC 2.A.1) superfamily. Organic cation transporter (TC 2.A.1.19) family. Expressed in the liver, brain, kidney, choroid plexus and weakly in the eye. Moderately expressed (at protein level) in the brain capillary endothelial cells (BCEC).

The protein resides in the basolateral cell membrane. It catalyses the reaction estrone 3-sulfate(out) + glutarate(in) = estrone 3-sulfate(in) + glutarate(out). The enzyme catalyses estrone 3-sulfate(in) + 2-oxoglutarate(out) = estrone 3-sulfate(out) + 2-oxoglutarate(in). It carries out the reaction glutarate(in) + 2-oxoglutarate(out) = glutarate(out) + 2-oxoglutarate(in). The catalysed reaction is urate(in) + 2-oxoglutarate(out) = urate(out) + 2-oxoglutarate(in). It catalyses the reaction taurocholate(out) + glutarate(in) = taurocholate(in) + glutarate(out). The enzyme catalyses dehydroepiandrosterone 3-sulfate(out) + glutarate(in) = dehydroepiandrosterone 3-sulfate(in) + glutarate(out). It carries out the reaction prostaglandin F2alpha(out) + glutarate(in) = prostaglandin F2alpha(in) + glutarate(out). The catalysed reaction is prostaglandin F2alpha(out) + 2-oxoglutarate(in) = prostaglandin F2alpha(in) + 2-oxoglutarate(out). It catalyses the reaction (R)-carnitine(out) + 2-oxoglutarate(in) = (R)-carnitine(in) + 2-oxoglutarate(out). The enzyme catalyses glutarate(in) + (R)-carnitine(out) = glutarate(out) + (R)-carnitine(in). It carries out the reaction prostaglandin E2(out) + 2-oxoglutarate(in) = prostaglandin E2(in) + 2-oxoglutarate(out). The catalysed reaction is prostaglandin E2(out) + glutarate(in) = prostaglandin E2(in) + glutarate(out). It catalyses the reaction urate(in) + glutarate(out) = urate(out) + glutarate(in). The enzyme catalyses taurocholate(out) + 2-oxoglutarate(in) = taurocholate(in) + 2-oxoglutarate(out). It carries out the reaction dehydroepiandrosterone 3-sulfate(out) + 2-oxoglutarate(in) = dehydroepiandrosterone 3-sulfate(in) + 2-oxoglutarate(out). The catalysed reaction is kynurenate(out) + a dicarboxylate(in) = kynurenate(in) + a dicarboxylate(out). It catalyses the reaction (indol-3-yl)acetate(out) + a dicarboxylate(in) = (indol-3-yl)acetate(in) + a dicarboxylate(out). The enzyme catalyses indoxyl sulfate(out) + a dicarboxylate(in) = indoxyl sulfate(in) + a dicarboxylate(out). It carries out the reaction N-benzoylglycine(out) + a dicarboxylate(in) = N-benzoylglycine(in) + a dicarboxylate(out). The catalysed reaction is 3-carboxy-4-methyl-5-propyl-2-furanpropanoate(out) + a dicarboxylate(in) = 3-carboxy-4-methyl-5-propyl-2-furanpropanoate(in) + a dicarboxylate(out). It catalyses the reaction (6R)-L-erythro-5,6,7,8-tetrahydrobiopterin(out) + a dicarboxylate(in) = (6R)-L-erythro-5,6,7,8-tetrahydrobiopterin(in) + a dicarboxylate(out). The enzyme catalyses L-erythro-7,8-dihydrobiopterin(out) + a dicarboxylate(in) = L-erythro-7,8-dihydrobiopterin(in) + a dicarboxylate(out). It carries out the reaction L-sepiapterin(out) + a dicarboxylate(in) = L-sepiapterin(in) + a dicarboxylate(out). Functionally, functions as an organic anion/dicarboxylate exchanger that couples organic anion uptake indirectly to the sodium gradient. Transports organic anions such as estrone 3-sulfate (E1S) and urate in exchange for dicarboxylates such as glutarate or ketoglutarate (2-oxoglutarate). Plays an important role in the excretion of endogenous and exogenous organic anions, especially from the kidney and the brain. E1S transport is pH- and chloride-dependent and may also involve E1S/cGMP exchange. Responsible for the transport of prostaglandin E2 (PGE2) and prostaglandin F2(alpha) (PGF2(alpha)) in the basolateral side of the renal tubule. Involved in the transport of neuroactive tryptophan metabolites kynurenate and xanthurenate. Functions as a biopterin transporters involved in the uptake and the secretion of coenzymes tetrahydrobiopterin (BH4), dihydrobiopterin (BH2) and sepiapterin to urine, thereby determining baseline levels of blood biopterins. May be involved in the basolateral transport of steviol, a metabolite of the popular sugar substitute stevioside. May participate in the detoxification/ renal excretion of drugs and xenobiotics, such as the histamine H(2)-receptor antagonists fexofenadine and cimetidine, the antibiotic benzylpenicillin (PCG), the anionic herbicide 2,4-dichloro-phenoxyacetate (2,4-D), the diagnostic agent p-aminohippurate (PAH), the antiviral acyclovir (ACV), and the mycotoxin ochratoxin (OTA), by transporting these exogenous organic anions across the cell membrane in exchange for dicarboxylates such as 2-oxoglutarate. Contributes to the renal uptake of potent uremic toxins (indoxyl sulfate (IS), indole acetate (IA), hippurate/N-benzoylglycine (HA) and 3-carboxy-4-methyl-5-propyl-2-furanpropionate (CMPF)), pravastatin, PCG, E1S and dehydroepiandrosterone sulfate (DHEAS), and is partly involved in the renal uptake of temocaprilat (an angiotensin-converting enzyme (ACE) inhibitor). May contribute to the release of cortisol in the adrenals. Involved in one of the detoxification systems on the choroid plexus (CP), removes substrates such as E1S or taurocholate (TC), PCG, 2,4-D and PAH, from the cerebrospinal fluid (CSF) to the blood for eventual excretion in urine and bile. Regulates the CSF concentration of histamine H(2)-receptor antagonists cimetidine and ranitidine at the CP. Also contributes to the uptake of several other organic compounds such as the prostanoids prostaglandin E(2) and prostaglandin F(2-alpha), L-carnitine, and the therapeutic drugs allopurinol, 6-mercaptopurine (6-MP) and 5-fluorouracil (5-FU). Mediates the uptake from brain of organic anions, such as E1S, PAH, and OTA. Mediates the transport of PAH, PCG, and the statins pravastatin and pitavastatin, from the cerebrum into the blood circulation across the blood-brain barrier (BBB). In summary, plays a role in the efflux of drugs and xenobiotics, helping reduce their undesired toxicological effects on the body. In Rattus norvegicus (Rat), this protein is Organic anion transporter 3 (Slc22a8).